Reading from the N-terminus, the 184-residue chain is Ribosome-recycling factor (184 aa).

A disordered region spans residues 134-167; sequence MNDQLKKDEKNGDITEDELRSGTEDVQKATDNSI.

Belongs to the RRF family.

It is found in the cytoplasm. Responsible for the release of ribosomes from messenger RNA at the termination of protein biosynthesis. May increase the efficiency of translation by recycling ribosomes from one round of translation to another. This is Ribosome-recycling factor from Staphylococcus aureus (strain Mu3 / ATCC 700698).